Reading from the N-terminus, the 372-residue chain is MALKFHVLHQSKKSRARVGRIETAHGIIDTPAFVPVATNGALKGVVDHSNIQLMFCNTYHLLVHPGTEAIAAMGGLHKFIHRNSPIITDSGGFQIFSLAYGSVAEEIKSCGKKKGSSSILEVTDEGVWFKSYRDGSKLFLSPEVSVQAQKDLGADIIIPLDELLPFHSDTTYFLSSCARTYVWEKRSLDYHKKDPRHQSMYGVIHGGIDPKQRKIGCAFVEDHPFDGFAIGGSLGRNLNEMVPIVDITTSYLSKDRPVHLLGIGDLPSIQATIGFGIDSFDSSYPTKAARHGLILSSQGPIKIANQAYTNDLSPIDPECTCLTCTSKISRAYLRHLFKVHEPNASIWASIHNLHYMQEFMKNIREQILHDRI.

Asp89 (proton acceptor) is an active-site residue. Residues Asp89–Phe93, Asp161, and Gly232 contribute to the substrate site. Residues Gly262–Ser268 are RNA binding. Asp281 functions as the Nucleophile in the catalytic mechanism. The RNA binding; important for wobble base 34 recognition stretch occupies residues Thr286–Arg290. Residues Cys319, Cys321, Cys324, and His351 each coordinate Zn(2+).

Belongs to the queuine tRNA-ribosyltransferase family. As to quaternary structure, homodimer. Within each dimer, one monomer is responsible for RNA recognition and catalysis, while the other monomer binds to the replacement base PreQ1. The cofactor is Zn(2+).

It carries out the reaction 7-aminomethyl-7-carbaguanine + guanosine(34) in tRNA = 7-aminomethyl-7-carbaguanosine(34) in tRNA + guanine. The protein operates within tRNA modification; tRNA-queuosine biosynthesis. Its function is as follows. Catalyzes the base-exchange of a guanine (G) residue with the queuine precursor 7-aminomethyl-7-deazaguanine (PreQ1) at position 34 (anticodon wobble position) in tRNAs with GU(N) anticodons (tRNA-Asp, -Asn, -His and -Tyr). Catalysis occurs through a double-displacement mechanism. The nucleophile active site attacks the C1' of nucleotide 34 to detach the guanine base from the RNA, forming a covalent enzyme-RNA intermediate. The proton acceptor active site deprotonates the incoming PreQ1, allowing a nucleophilic attack on the C1' of the ribose to form the product. After dissociation, two additional enzymatic reactions on the tRNA convert PreQ1 to queuine (Q), resulting in the hypermodified nucleoside queuosine (7-(((4,5-cis-dihydroxy-2-cyclopenten-1-yl)amino)methyl)-7-deazaguanosine). The chain is Queuine tRNA-ribosyltransferase from Chlamydia abortus (strain DSM 27085 / S26/3) (Chlamydophila abortus).